The chain runs to 264 residues: Proteasome subunit beta type-5 (264 aa).

The propeptide at 1-59 is removed in mature form; sequence MALASVLQRPMPVNQHGFFGLGGGADLLDLGPGSPGDGLSLAAPSWGVPEEPRIEMLHG. The active-site Nucleophile is T60. Position 108 (A108) interacts with bortezomib.

The protein belongs to the peptidase T1B family. The 26S proteasome consists of a 20S proteasome core and two 19S regulatory subunits. The 20S proteasome core is a barrel-shaped complex made of 28 subunits that are arranged in four stacked rings. The two outer rings are each formed by seven alpha subunits, and the two inner rings are formed by seven beta subunits. The proteolytic activity is exerted by three beta-subunits PSMB5, PSMB6 and PSMB7. Directly interacts with POMP. Interacts with ABCB1 and TAP1. As to expression, expressed in uterus at the embryo implantation site.

Its subcellular location is the cytoplasm. It localises to the nucleus. It carries out the reaction Cleavage of peptide bonds with very broad specificity.. Its function is as follows. Component of the 20S core proteasome complex involved in the proteolytic degradation of most intracellular proteins. This complex plays numerous essential roles within the cell by associating with different regulatory particles. Associated with two 19S regulatory particles, forms the 26S proteasome and thus participates in the ATP-dependent degradation of ubiquitinated proteins. The 26S proteasome plays a key role in the maintenance of protein homeostasis by removing misfolded or damaged proteins that could impair cellular functions, and by removing proteins whose functions are no longer required. Associated with the PA200 or PA28, the 20S proteasome mediates ubiquitin-independent protein degradation. This type of proteolysis is required in several pathways including spermatogenesis (20S-PA200 complex) or generation of a subset of MHC class I-presented antigenic peptides (20S-PA28 complex). Within the 20S core complex, PSMB5 displays a chymotrypsin-like activity. This is Proteasome subunit beta type-5 (Psmb5) from Mus musculus (Mouse).